Consider the following 494-residue polypeptide: Aspartyl/glutamyl-tRNA(Asn/Gln) amidotransferase subunit B (494 aa).

Belongs to the GatB/GatE family. GatB subfamily. In terms of assembly, heterotrimer of A, B and C subunits.

The catalysed reaction is L-glutamyl-tRNA(Gln) + L-glutamine + ATP + H2O = L-glutaminyl-tRNA(Gln) + L-glutamate + ADP + phosphate + H(+). It carries out the reaction L-aspartyl-tRNA(Asn) + L-glutamine + ATP + H2O = L-asparaginyl-tRNA(Asn) + L-glutamate + ADP + phosphate + 2 H(+). Functionally, allows the formation of correctly charged Asn-tRNA(Asn) or Gln-tRNA(Gln) through the transamidation of misacylated Asp-tRNA(Asn) or Glu-tRNA(Gln) in organisms which lack either or both of asparaginyl-tRNA or glutaminyl-tRNA synthetases. The reaction takes place in the presence of glutamine and ATP through an activated phospho-Asp-tRNA(Asn) or phospho-Glu-tRNA(Gln). The polypeptide is Aspartyl/glutamyl-tRNA(Asn/Gln) amidotransferase subunit B (Protochlamydia amoebophila (strain UWE25)).